Here is a 99-residue protein sequence, read N- to C-terminus: DNA-directed RNA polymerase subunit omega (99 aa).

The protein belongs to the RNA polymerase subunit omega family. The RNAP catalytic core consists of 2 alpha, 1 beta, 1 beta' and 1 omega subunit. When a sigma factor is associated with the core the holoenzyme is formed, which can initiate transcription.

It carries out the reaction RNA(n) + a ribonucleoside 5'-triphosphate = RNA(n+1) + diphosphate. Promotes RNA polymerase assembly. Latches the N- and C-terminal regions of the beta' subunit thereby facilitating its interaction with the beta and alpha subunits. This Xanthomonas oryzae pv. oryzae (strain MAFF 311018) protein is DNA-directed RNA polymerase subunit omega.